Here is a 36-residue protein sequence, read N- to C-terminus: MDTRLIVIAAPVLVAASWALFNIGRLAIQQIQRLKR.

At 1 to 4 (MDTR) the chain is on the lumenal side. A helical membrane pass occupies residues 5 to 23 (LIVIAAPVLVAASWALFNI). Topologically, residues 24-36 (GRLAIQQIQRLKR) are stromal.

This sequence belongs to the PsbY family. As to quaternary structure, PSII is composed of 1 copy each of membrane proteins PsbA, PsbB, PsbC, PsbD, PsbE, PsbF, PsbH, PsbI, PsbJ, PsbK, PsbL, PsbM, PsbT, PsbX, PsbY, PsbZ, Psb30/Ycf12, at least 3 peripheral proteins of the oxygen-evolving complex and a large number of cofactors. It forms dimeric complexes.

It is found in the plastid. Its subcellular location is the chloroplast thylakoid membrane. Loosely associated component of the core of photosystem II (PSII), it is not always seen in crystals. PSII is a light-driven water plastoquinone oxidoreductase, using light energy to abstract electrons from H(2)O, generating a proton gradient subsequently used for ATP formation. In Phaeodactylum tricornutum (strain CCAP 1055/1), this protein is Photosystem II reaction center protein Y.